The chain runs to 436 residues: GTPase Obg (436 aa).

Residues 1–159 (MAFVDQATIE…LKVKLELRVL (159 aa)) form the Obg domain. An OBG-type G domain is found at 160-335 (ADVGLVGFPS…LLLKVADLLD (176 aa)). GTP-binding positions include 166–173 (GFPSAGKS), 191–195 (FTTID), 213–216 (DLPG), 285–288 (TKMD), and 316–318 (SSV). Ser173 and Thr193 together coordinate Mg(2+). The OCT domain occupies 357-436 (KDDHQSTDFQ…GADFAFEFEE (80 aa)).

The protein belongs to the TRAFAC class OBG-HflX-like GTPase superfamily. OBG GTPase family. Monomer. Mg(2+) is required as a cofactor.

The protein resides in the cytoplasm. An essential GTPase which binds GTP, GDP and possibly (p)ppGpp with moderate affinity, with high nucleotide exchange rates and a fairly low GTP hydrolysis rate. Plays a role in control of the cell cycle, stress response, ribosome biogenesis and in those bacteria that undergo differentiation, in morphogenesis control. The protein is GTPase Obg of Oenococcus oeni (strain ATCC BAA-331 / PSU-1).